We begin with the raw amino-acid sequence, 191 residues long: Large ribosomal subunit protein uL6 (191 aa).

It belongs to the universal ribosomal protein uL6 family. As to quaternary structure, part of the 50S ribosomal subunit.

This protein binds to the 23S rRNA, and is important in its secondary structure. It is located near the subunit interface in the base of the L7/L12 stalk, and near the tRNA binding site of the peptidyltransferase center. This is Large ribosomal subunit protein uL6 from Gloeobacter violaceus (strain ATCC 29082 / PCC 7421).